A 206-amino-acid chain; its full sequence is Histidine biosynthesis bifunctional protein HisIE (206 aa).

The interval Met-1–Phe-117 is phosphoribosyl-AMP cyclohydrolase. A phosphoribosyl-ATP pyrophosphohydrolase region spans residues Leu-118 to Arg-206.

This sequence in the N-terminal section; belongs to the PRA-CH family. It in the C-terminal section; belongs to the PRA-PH family.

It is found in the cytoplasm. The enzyme catalyses 1-(5-phospho-beta-D-ribosyl)-ATP + H2O = 1-(5-phospho-beta-D-ribosyl)-5'-AMP + diphosphate + H(+). It carries out the reaction 1-(5-phospho-beta-D-ribosyl)-5'-AMP + H2O = 1-(5-phospho-beta-D-ribosyl)-5-[(5-phospho-beta-D-ribosylamino)methylideneamino]imidazole-4-carboxamide. It participates in amino-acid biosynthesis; L-histidine biosynthesis; L-histidine from 5-phospho-alpha-D-ribose 1-diphosphate: step 2/9. Its pathway is amino-acid biosynthesis; L-histidine biosynthesis; L-histidine from 5-phospho-alpha-D-ribose 1-diphosphate: step 3/9. In Xylella fastidiosa (strain Temecula1 / ATCC 700964), this protein is Histidine biosynthesis bifunctional protein HisIE (hisI).